The primary structure comprises 426 residues: 4-hydroxy-3-methylbut-2-en-1-yl diphosphate synthase (flavodoxin) (426 aa).

Positions 1–20 (MLDRDLTLSDDAYESSPVSR) are disordered. Residues cysteine 320, cysteine 323, cysteine 366, and glutamate 373 each coordinate [4Fe-4S] cluster.

It belongs to the IspG family. Requires [4Fe-4S] cluster as cofactor.

It carries out the reaction (2E)-4-hydroxy-3-methylbut-2-enyl diphosphate + oxidized [flavodoxin] + H2O + 2 H(+) = 2-C-methyl-D-erythritol 2,4-cyclic diphosphate + reduced [flavodoxin]. Its pathway is isoprenoid biosynthesis; isopentenyl diphosphate biosynthesis via DXP pathway; isopentenyl diphosphate from 1-deoxy-D-xylulose 5-phosphate: step 5/6. In terms of biological role, converts 2C-methyl-D-erythritol 2,4-cyclodiphosphate (ME-2,4cPP) into 1-hydroxy-2-methyl-2-(E)-butenyl 4-diphosphate. The sequence is that of 4-hydroxy-3-methylbut-2-en-1-yl diphosphate synthase (flavodoxin) from Wolbachia pipientis subsp. Culex pipiens (strain wPip).